Consider the following 529-residue polypeptide: Bifunctional purine biosynthesis protein PurH (529 aa).

An MGS-like domain is found at 1–148 (MNNARPIRRA…KNHKDTTIIV (148 aa)).

This sequence belongs to the PurH family.

The enzyme catalyses (6R)-10-formyltetrahydrofolate + 5-amino-1-(5-phospho-beta-D-ribosyl)imidazole-4-carboxamide = 5-formamido-1-(5-phospho-D-ribosyl)imidazole-4-carboxamide + (6S)-5,6,7,8-tetrahydrofolate. It carries out the reaction IMP + H2O = 5-formamido-1-(5-phospho-D-ribosyl)imidazole-4-carboxamide. It functions in the pathway purine metabolism; IMP biosynthesis via de novo pathway; 5-formamido-1-(5-phospho-D-ribosyl)imidazole-4-carboxamide from 5-amino-1-(5-phospho-D-ribosyl)imidazole-4-carboxamide (10-formyl THF route): step 1/1. Its pathway is purine metabolism; IMP biosynthesis via de novo pathway; IMP from 5-formamido-1-(5-phospho-D-ribosyl)imidazole-4-carboxamide: step 1/1. This is Bifunctional purine biosynthesis protein PurH from Shewanella piezotolerans (strain WP3 / JCM 13877).